The following is a 236-amino-acid chain: Alpha-acetolactate decarboxylase (236 aa).

Belongs to the alpha-acetolactate decarboxylase family.

The catalysed reaction is (2S)-2-acetolactate + H(+) = (R)-acetoin + CO2. The protein operates within polyol metabolism; (R,R)-butane-2,3-diol biosynthesis; (R,R)-butane-2,3-diol from pyruvate: step 2/3. Converts acetolactate into acetoin. The chain is Alpha-acetolactate decarboxylase (aldB) from Lactococcus lactis subsp. cremoris (strain MG1363).